The following is a 315-amino-acid chain: Protein-L-isoaspartate O-methyltransferase (315 aa).

2 disordered regions span residues 1–47 (MSGE…KPAA) and 59–89 (RALP…AAPK). The span at 14–34 (EDLKRAPRKSEVRSGSGERHA) shows a compositional bias: basic and acidic residues. Low complexity-rich tracts occupy residues 35 to 47 (ASAV…KPAA) and 59 to 81 (RALP…LKPA). S162 is an active-site residue.

It belongs to the methyltransferase superfamily. L-isoaspartyl/D-aspartyl protein methyltransferase family.

The protein localises to the cytoplasm. It catalyses the reaction [protein]-L-isoaspartate + S-adenosyl-L-methionine = [protein]-L-isoaspartate alpha-methyl ester + S-adenosyl-L-homocysteine. In terms of biological role, catalyzes the methyl esterification of L-isoaspartyl residues in peptides and proteins that result from spontaneous decomposition of normal L-aspartyl and L-asparaginyl residues. It plays a role in the repair and/or degradation of damaged proteins. The polypeptide is Protein-L-isoaspartate O-methyltransferase (Burkholderia ambifaria (strain MC40-6)).